The chain runs to 145 residues: Hemoglobin subunit beta-2 (145 aa).

In terms of domain architecture, Globin spans 2-145; the sequence is HLTDQEIKYI…VADAVGKGYH (144 aa). Heme b is bound by residues H63 and H91.

It belongs to the globin family. Red blood cells.

The polypeptide is Hemoglobin subunit beta-2 (Telmatobius peruvianus (Andean frog)).